The primary structure comprises 118 residues: Ribonuclease P protein component (118 aa).

Belongs to the RnpA family. In terms of assembly, consists of a catalytic RNA component (M1 or rnpB) and a protein subunit.

The catalysed reaction is Endonucleolytic cleavage of RNA, removing 5'-extranucleotides from tRNA precursor.. Its function is as follows. RNaseP catalyzes the removal of the 5'-leader sequence from pre-tRNA to produce the mature 5'-terminus. It can also cleave other RNA substrates such as 4.5S RNA. The protein component plays an auxiliary but essential role in vivo by binding to the 5'-leader sequence and broadening the substrate specificity of the ribozyme. This is Ribonuclease P protein component from Bifidobacterium animalis subsp. lactis (strain AD011).